A 336-amino-acid polypeptide reads, in one-letter code: MSATSINPNNWHWTSKDCRVWSHEYFNKELPKIQASEGPTSARITQVNSCEGDVDVSMRKRKVITIFDLKIQMEFKGETKDGVEATGSITCPELSYDLGYSDYVFDIDIYSASKEKEPIKELVREKIIPQIRQLFSGFSQVLLQTHGDDVYLSTEEHNGNAARGLPVHSSFKQNNSSQTSSNKGTTTVAAGSGSDGSRVSAVVNTADISENYTFDAPANELYATFLDPARVAAWSRAPPQLDVRPQGAFSLFHGNVVGKFLVLEENKKIVQTWRLSSWPTGHYAEITFTFDQADSYTTLRMIMKGVPIGEEEVVQGNIQDYYIRPIKTVFGFGAVL.

The interval 162 to 195 is disordered; that stretch reads ARGLPVHSSFKQNNSSQTSSNKGTTTVAAGSGSD. A compositionally biased stretch (low complexity) spans 169 to 187; sequence SSFKQNNSSQTSSNKGTTT.

Belongs to the AHA1 family.

This is an uncharacterized protein from Schizosaccharomyces pombe (strain 972 / ATCC 24843) (Fission yeast).